The primary structure comprises 378 residues: Stimulator of interferon genes protein (378 aa).

Residues Met-1–Arg-17 are Cytoplasmic-facing. The tract at residues Met-1–Leu-189 is mediates interaction with ZDHHC1 and ZDHHC11. The chain crosses the membrane as a helical span at residues Ser-18–Trp-34. Lys-19 is covalently cross-linked (Glycyl lysine isopeptide (Lys-Gly) (interchain with G-Cter in ubiquitin)). At Val-35–Leu-44 the chain is on the lumenal side. Residues Lys-45–Glu-69 form a helical membrane-spanning segment. Residues Leu-70–Cys-91 lie on the Cytoplasmic side of the membrane. Residues Cys-88 and Cys-91 are each lipidated (S-palmitoyl cysteine). The helical transmembrane segment at Pro-92 to Tyr-106 threads the bilayer. At Phe-107 to Tyr-115 the chain is on the lumenal side. Residues Leu-116–Leu-133 traverse the membrane as a helical segment. The Cytoplasmic portion of the chain corresponds to Gly-134–Ile-378. A Glycyl lysine isopeptide (Lys-Gly) (interchain with G-Cter in ubiquitin) cross-link involves residue Lys-150. Positions Leu-152–Glu-339 are cyclic dinucleotide-binding domain (CBD). Gly-165 contributes to the 3',3'-c-di-GMP binding site. 2',3'-cUAMP is bound at residue Tyr-166. Tyr-166 is a 3',3'-cGAMP binding site. Lys-235 is covalently cross-linked (Glycyl lysine isopeptide (Lys-Gly) (interchain with G-Cter in ubiquitin)). Residue Arg-237 participates in 2',3'-cUAMP binding. Arg-237 provides a ligand contact to 3',3'-cGAMP. A 2',3'-cGAMP-binding site is contributed by Arg-237. Residues Arg-237 to Ser-240 and Thr-262 each bind 3',3'-c-di-GMP. A Phosphoserine modification is found at Ser-240. Thr-262 serves as a coordination point for 2',3'-cUAMP. A 2',3'-cGAMP-binding site is contributed by Thr-262. Lys-337 participates in a covalent cross-link: Glycyl lysine isopeptide (Lys-Gly) (interchain with G-Cter in SUMO). The segment at Glu-339–Ile-378 is C-terminal tail (CTT). Ser-354 carries the post-translational modification Phosphoserine; by MAP3K7. A phosphoserine; by TBK1 mark is found at Ser-357 and Ser-365. The short motif at Leu-362–Ser-365 is the pLxIS motif element.

Belongs to the STING family. In terms of assembly, homodimer; forms a homodimer in absence of cyclic nucleotide (c-di-GMP or cGAMP); 'Lys-63'-linked ubiquitination at Lys-150 is required for homodimerization. Homotetramer; in presence of cyclic nucleotide (c-di-GMP or cGAMP), forms tetramers and higher-order oligomers through side-by-side packing. Interacts (when phosphorylated) with IRF3; following activation and phosphorylation on the pLxIS motif by TBK1, recruits IRF3. Interacts with RIGI, MAVS and SSR2. Interacts with RNF5 and TRIM56. Interacts with TBK1; when homodimer, leading to subsequent production of IFN-beta. Interacts with IFIT1 and IFIT2. Interacts with TRIM29; this interaction induces STING1 ubiquitination and subsequent degradation. Associates with the MHC-II complex. Interacts with STEEP1; interaction takes place upon cGAMP-activation and STING1 phosphorylation by MAP3K7/TAK1 and promotes STING1 translocation to COPII vesicles. Interacts with SEC24A, SEC24B and SEC24C; promoting translocation to COPII vesicles. Interacts (when ubiquitinated) with SQSTM1; leading to relocalization to autophagosomes. Interacts with SURF4. Interacts with HNRNPA2B1. Interacts with ZDHHC1; ZDHHC1 constitutively interacts with STING1 and in presence of DNA viruses activates it by promoting its cGAMP-induced oligomerization and the recruitment of downstream signaling components. Interacts with ZDHHC11; in presence of DNA viruses promotes the recruitment of IRF3 to STING1. Interacts with TOMM70. Interacts with IFI204. Interacts with TAB1; promoting recruitment of TAB1 to the endoplasmic reticulum membrane and subsequent activation of MAP3K7/TAK1. Interacts (via transmembrane domain) with TMEM203. Interacts with DDX41. Post-translationally, phosphorylation by TBK1 leads to activation and production of IFN-beta. Following cyclic nucleotide (c-di-GMP or cGAMP)-binding, activation and translocation from the endoplasmic reticulum, STING1 is phosphorylated by TBK1 at Ser-365 in the pLxIS motif. The phosphorylated pLxIS motif constitutes an IRF3-binding motif, leading to recruitment of the transcription factor IRF3 to induce type-I interferons and other cytokines. The phosphorylated pLxIS motif facilitates SENP2 recruitment during late phase of viral infection. Phosphorylated on tyrosine residues upon MHC-II aggregation. Dephosphorylation by PPP6C leads to inactivation and decreased production of IFN-beta. Phosphorylation at Ser-357 is also required to activate IRF3. Phosphorylation at Ser-354 by MAP3K7/TAK1 facilitates its interaction with STEEP1, promoting STING1 translocation to COPII vesicles. In terms of processing, ubiquitinated. Ubiquitinated via 'Lys-63'-linked ubiquitin chains in response to double-stranded DNA treatment, leading to relocalization to autophagosomes and subsequent degradation; this process is dependent on SQSTM1. 'Lys-63'-linked ubiquitination mediated by TRIM56 at Lys-150 promotes homodimerization and recruitment of the antiviral kinase TBK1 and subsequent production of IFN-beta. 'Lys-48'-linked polyubiquitination at Lys-150 occurring after viral infection is mediated by RNF5 and leads to proteasomal degradation. 'Lys-11'-linked polyubiquitination at Lys-150 by RNF26 leads to stabilize STING1: it protects STING1 from RNF5-mediated 'Lys-48'-linked polyubiquitination. 'Lys-33'-linked and 'Lys-48'-linked deubiquitinated by USP20; leading to its stabilization and promotion of innate antiviral response. 'Lys-48'-linked deubiquitinated by USP44; leading to its stabilization and promotion of innate antiviral response. Deubiquitinated by USP13; leading to inhibition of innate antiviral response. 'Lys-63'-linked deubiquitinated by USP49; leading to inhibition of the subsequent recruitment of TBK1 to the signaling complex. 'Lys-63'-linked ubiquitination mediated by RNF39 promotes the activation of the cGAS-STING pathway. MARCHF5-mediated ubiquitination prevents the oxidation-induced polymer formation. Sumoylated at Lys-337 by TRIM38 during the early phase of viral infection, promoting its stability by preventing its relocalization to autophagosomes and subsequent degradation. Desumoylated by SENP2 during the late phase of viral infection. Post-translationally, palmitoylation takes place in the Golgi apparatus and creates a platform for the recruitment of TBK1. As to expression, present in spleen and thymus tissue. Also present in dendritic cells (at protein level).

Its subcellular location is the endoplasmic reticulum membrane. The protein localises to the cytoplasm. It localises to the perinuclear region. The protein resides in the endoplasmic reticulum-Golgi intermediate compartment membrane. It is found in the golgi apparatus membrane. Its subcellular location is the cytoplasmic vesicle. The protein localises to the autophagosome membrane. It localises to the mitochondrion outer membrane. The protein resides in the cell membrane. It is found in the lysosome membrane. The enzyme catalyses H(+)(in) = H(+)(out). Activated by anticancer drug 5,6-dimethylxanthenone 4-acetic acid (DMXAA). Specifically inhibited by nitrofuran derivatives C-178 and C-176, which covalently bind Cys-91 and prevent palmitoylation and subsequent activation od STING1. In terms of biological role, facilitator of innate immune signaling that acts as a sensor of cytosolic DNA from bacteria and viruses and promotes the production of type I interferon (IFN-alpha and IFN-beta). Innate immune response is triggered in response to non-CpG double-stranded DNA from viruses and bacteria delivered to the cytoplasm. Acts by binding cyclic dinucleotides: recognizes and binds cyclic di-GMP (c-di-GMP), a second messenger produced by bacteria, cyclic UMP-AMP (2',3'-cUAMP), and cyclic GMP-AMP (cGAMP), a messenger produced by CGAS in response to DNA virus in the cytosol. Upon binding to c-di-GMP, cUAMP or cGAMP, STING1 oligomerizes, translocates from the endoplasmic reticulum and is phosphorylated by TBK1 on the pLxIS motif, leading to recruitment and subsequent activation of the transcription factor IRF3 to induce expression of type I interferon and exert a potent anti-viral state. Exhibits 2',3' phosphodiester linkage-specific ligand recognition: can bind both 2'-3' linked cGAMP (2'-3'-cGAMP) and 3'-3' linked cGAMP but is preferentially activated by 2'-3' linked cGAMP. The preference for 2'-3'-cGAMP, compared to other linkage isomers is probably due to the ligand itself, whichs adopts an organized free-ligand conformation that resembles the STING1-bound conformation and pays low energy costs in changing into the active conformation. In addition to promote the production of type I interferons, plays a direct role in autophagy. Following cGAMP-binding, STING1 buds from the endoplasmic reticulum into COPII vesicles, which then form the endoplasmic reticulum-Golgi intermediate compartment (ERGIC). The ERGIC serves as the membrane source for WIPI2 recruitment and LC3 lipidation, leading to formation of autophagosomes that target cytosolic DNA or DNA viruses for degradation by the lysosome. Promotes autophagy by acting as a proton channel that directs proton efflux from the Golgi to facilitate MAP1LC3B/LC3B lipidation. The autophagy- and interferon-inducing activities can be uncoupled and autophagy induction is independent of TBK1 phosphorylation. Autophagy is also triggered upon infection by bacteria: following c-di-GMP-binding, which is produced by live Gram-positive bacteria, promotes reticulophagy. May be involved in translocon function, the translocon possibly being able to influence the induction of type I interferons. May be involved in transduction of apoptotic signals via its association with the major histocompatibility complex class II (MHC-II). This chain is Stimulator of interferon genes protein, found in Mus musculus (Mouse).